Here is a 255-residue protein sequence, read N- to C-terminus: 5-oxoprolinase subunit A (255 aa).

Belongs to the LamB/PxpA family. As to quaternary structure, forms a complex composed of PxpA, PxpB and PxpC.

The catalysed reaction is 5-oxo-L-proline + ATP + 2 H2O = L-glutamate + ADP + phosphate + H(+). Its function is as follows. Catalyzes the cleavage of 5-oxoproline to form L-glutamate coupled to the hydrolysis of ATP to ADP and inorganic phosphate. The chain is 5-oxoprolinase subunit A from Thermococcus onnurineus (strain NA1).